We begin with the raw amino-acid sequence, 224 residues long: CASP-like protein 3A1 (224 aa).

Topologically, residues 1–59 are cytoplasmic; that stretch reads MMMNGQKLAPAAEVAVQLPESKVAADNISGTMSGPLVGASGGGTTAAMRPFGRKAEVMH. A helical membrane pass occupies residues 60 to 80; that stretch reads VLLRLLCIITSVAALSFMFTA. The Extracellular segment spans residues 81–106; the sequence is QQSSTISIYGFMLPVQSKWSFSHSFE. A helical transmembrane segment spans residues 107-127; the sequence is YLVGVSAAVAAHSLLQLLISM. Topologically, residues 128 to 142 are cytoplasmic; it reads SRLLRKSPVIPSRSH. Residues 143–163 form a helical membrane-spanning segment; sequence AWLIFAGDQVFAYAMISAGAA. Over 164 to 192 the chain is Extracellular; it reads ASGVTNLNRTGIQHTALPNFCKPLQSFCD. The N-linked (GlcNAc...) asparagine glycan is linked to N171. A helical membrane pass occupies residues 193 to 213; the sequence is HVAVSIFFTFTSCFLLAASAV. At 214–224 the chain is on the cytoplasmic side; the sequence is QEVIWLSRSKY.

Belongs to the Casparian strip membrane proteins (CASP) family. In terms of assembly, homodimer and heterodimers.

It is found in the cell membrane. The protein is CASP-like protein 3A1 of Populus trichocarpa (Western balsam poplar).